Here is a 390-residue protein sequence, read N- to C-terminus: Cathepsin D (390 aa).

Positions 1 to 44 (VIRIPLHKFTSIRRTMSEAAGXVXXLIAKGPISKYATGEPAVRQ) are cleaved as a propeptide — activation peptide. The region spanning 59 to 385 (YYGEIGIGTP…DRDQNRVGLA (327 aa)) is the Peptidase A1 domain. Disulfide bonds link Cys71-Cys140 and Cys90-Cys97. Residue Asp77 is part of the active site. 2 N-linked (GlcNAc...) asparagine glycosylation sites follow: Asn114 and Asn241. Residues Cys264 and Cys268 are joined by a disulfide bond. Asp273 is a catalytic residue. Residues Cys307 and Cys344 are joined by a disulfide bond.

The protein belongs to the peptidase A1 family. In terms of assembly, consists of a light chain and a heavy chain. Interacts with ADAM30; this leads to activation of CTSD. Interacts with GRN; stabilizes CTSD; increases its proteolytic activity. Post-translationally, N- and O-glycosylated. In terms of processing, undergoes proteolytic cleavage and activation by ADAM30.

The protein localises to the lysosome. It localises to the melanosome. The protein resides in the secreted. Its subcellular location is the extracellular space. It carries out the reaction Specificity similar to, but narrower than, that of pepsin A. Does not cleave the 4-Gln-|-His-5 bond in B chain of insulin.. In terms of biological role, acid protease active in intracellular protein breakdown. Plays a role in APP processing following cleavage and activation by ADAM30 which leads to APP degradation. This chain is Cathepsin D (CTSD), found in Bos taurus (Bovine).